The chain runs to 137 residues: Phosphomevalonate dehydratase small subunit (137 aa).

The active-site Proton acceptor is serine 65.

This sequence belongs to the AcnX type II small subunit family. In terms of assembly, heterodimer composed of a large subunit (PMDh-L) and a small subunit (PMDh-S).

The catalysed reaction is (R)-5-phosphomevalonate = (2E)-3-methyl-5-phosphooxypent-2-enoate + H2O. It participates in isoprenoid biosynthesis; isopentenyl diphosphate biosynthesis via mevalonate pathway. Component of a hydro-lyase that catalyzes the dehydration of mevalonate 5-phosphate (MVA5P) to form trans-anhydromevalonate 5-phosphate (tAHMP). Involved in the archaeal mevalonate (MVA) pathway, which provides fundamental precursors for isoprenoid biosynthesis, such as isopentenyl diphosphate (IPP) and dimethylallyl diphosphate (DMAPP). The polypeptide is Phosphomevalonate dehydratase small subunit (Methanococcoides burtonii (strain DSM 6242 / NBRC 107633 / OCM 468 / ACE-M)).